Here is a 566-residue protein sequence, read N- to C-terminus: E3 ubiquitin-protein ligase RNF220 (566 aa).

Lysine 277 is covalently cross-linked (Glycyl lysine isopeptide (Lys-Gly) (interchain with G-Cter in SUMO2)). Residues 277-297 (KREGESPTASPHSSATDDLHH) are disordered. Residue serine 390 is modified to Phosphoserine. Positions 485-513 (EDSAVTTFEALKARVRELERQLSRGDRYK) form a coiled coil. The segment at 514 to 522 (CLICMDSYS) is required for targeting to the cytoplasm. The RING-type zinc finger occupies 514 to 553 (CLICMDSYSMPLTSIQCWHVHCEECWLRTLGAKKLCPQCY).

As to quaternary structure, interacts with SIN3B. Interacts with CTNNB1 (via Armadillo repeats 2-8). Interacts with USP7 (via MATH domain). In terms of processing, auto-ubiquitinated; leads to proteasomal degradation.

The protein localises to the cytoplasm. The catalysed reaction is S-ubiquitinyl-[E2 ubiquitin-conjugating enzyme]-L-cysteine + [acceptor protein]-L-lysine = [E2 ubiquitin-conjugating enzyme]-L-cysteine + N(6)-ubiquitinyl-[acceptor protein]-L-lysine.. The protein operates within protein modification; protein ubiquitination. In terms of biological role, E3 ubiquitin-protein ligase that promotes the ubiquitination and proteasomal degradation of SIN3B. Independently of its E3 ligase activity, acts as a CTNNB1 stabilizer through USP7-mediated deubiquitination of CTNNB1 promoting Wnt signaling. In Bos taurus (Bovine), this protein is E3 ubiquitin-protein ligase RNF220 (RNF220).